We begin with the raw amino-acid sequence, 133 residues long: Ribosome-binding factor A (133 aa).

It belongs to the RbfA family. Monomer. Binds 30S ribosomal subunits, but not 50S ribosomal subunits or 70S ribosomes.

Its subcellular location is the cytoplasm. Functionally, one of several proteins that assist in the late maturation steps of the functional core of the 30S ribosomal subunit. Associates with free 30S ribosomal subunits (but not with 30S subunits that are part of 70S ribosomes or polysomes). Required for efficient processing of 16S rRNA. May interact with the 5'-terminal helix region of 16S rRNA. The polypeptide is Ribosome-binding factor A (Nostoc sp. (strain PCC 7120 / SAG 25.82 / UTEX 2576)).